A 132-amino-acid chain; its full sequence is Transmembrane protein 170B (132 aa).

The Extracellular portion of the chain corresponds to 1–37 (MRAEGADHSMINLSVQQVLSLWAHGTVLRNLTEMWYW). Asparagine 12 is a glycosylation site (N-linked (GlcNAc...) asparagine). A helical transmembrane segment spans residues 38 to 58 (IFLWALFSSLFVHGAAGVLMF). Residues 59 to 68 (VMLQRHRQGR) are Cytoplasmic-facing. The chain crosses the membrane as a helical span at residues 69-89 (VISIIAVSIGFLASVTGAMIT). Topologically, residues 90 to 104 (SAAVAGIYRVAGKNM) are extracellular. A helical membrane pass occupies residues 105–125 (APLEALVWGVGQTVLTLIISF). The Cytoplasmic segment spans residues 126–132 (SRILATL).

The protein belongs to the TMEM170 family. As to quaternary structure, interacts with CTNNB1.

The protein localises to the cell membrane. The protein is Transmembrane protein 170B of Mus musculus (Mouse).